An 804-amino-acid polypeptide reads, in one-letter code: Protein SEY1 homolog 1 (804 aa).

Over 1 to 638 (MEQIITGEGQ…SVLASQNNEH (638 aa)) the chain is Cytoplasmic. The GB1/RHD3-type G domain occupies 28–245 (GTDYHMVSII…EENYLFKEKS (218 aa)). 38–45 (GCQSSGKS) is a GTP binding site. A helical membrane pass occupies residues 639–659 (IPPWAWFLFLFSCSDYILWWL). The Lumenal portion of the chain corresponds to 660–662 (SNP). The chain crosses the membrane as a helical span at residues 663-683 (LLFSLTVLFGGTYLVLNQLGL). Residues 684-804 (WDTAVQKLLD…RKRVRVGTLV (121 aa)) lie on the Cytoplasmic side of the membrane. Residues 706-804 (PDENNETETN…RKRVRVGTLV (99 aa)) form a disordered region. Residues 751–791 (QGLTKTESNVTFANVSNANDEQSLTKNNTEDSLNTGSSSSG) are compositionally biased toward polar residues. Basic residues predominate over residues 792-804 (QRHRKRVRVGTLV).

This sequence belongs to the TRAFAC class dynamin-like GTPase superfamily. GB1/RHD3 GTPase family. RHD3 subfamily.

The protein localises to the endoplasmic reticulum membrane. Functionally, probable GTP-binding protein that may be involved in cell development. This Trichomonas vaginalis (strain ATCC PRA-98 / G3) protein is Protein SEY1 homolog 1.